The primary structure comprises 172 residues: Translationally-controlled tumor protein (172 aa).

Residues 1 to 172 (MIIYRDLISH…FKDGLEMEKC (172 aa)) enclose the TCTP domain. Residue Ser-46 is modified to Phosphoserine; by PLK1. Ser-53 bears the Phosphoserine mark. Phosphoserine; by PLK1 is present on Ser-64. The required for reduction of TSC22D1 protein stability stretch occupies residues 70-172 (VDIVMNHHLQ…FKDGLEMEKC (103 aa)).

Belongs to the TCTP family. Homodimer. Interacts with STEAP3. Interacts with TSC22D1; interaction results in the destabilization of TSC22D1 protein. In terms of tissue distribution, found in several healthy and tumoral cells including erythrocytes, hepatocytes, macrophages, platelets, keratinocytes, erythroleukemia cells, gliomas, melanomas, hepatoblastomas, and lymphomas. It cannot be detected in kidney and renal cell carcinoma (RCC). Expressed in placenta and prostate.

It localises to the cytoplasm. Functionally, involved in calcium binding and microtubule stabilization. Acts as a negative regulator of TSC22D1-mediated apoptosis, via interaction with and destabilization of TSC22D1 protein. This chain is Translationally-controlled tumor protein (TPT1), found in Homo sapiens (Human).